Consider the following 289-residue polypeptide: YLVSPAAYAALGAYMFLLILVGFPVNFLTLYVTLDHKKLRTPLNYILLNLAVADLFMVLGGFTTTMYTSMHGYFVLGRLGCNLEGFFATLGGEIALWSLVVLAIERWIVVCKPISNFRFTEDHAIMGLAFSWVMALTCAVPPLVGWSRYIPEGMQCSCGVDYYTRAEGFNTESFVLYMFTVHFLIPLSVIFFCYGRLLCAVKEAAAAQQESETTQRAEKEVSRMVVLMVIGFLVCWLPYASVAWWIFCNQGSEFGPIFMTLPAFFAKTSAIYNPLIYICMNKQFRHCMI.

Topologically, residues 1–7 (YLVSPAA) are extracellular. Residues 8 to 32 (YAALGAYMFLLILVGFPVNFLTLYV) form a helical membrane-spanning segment. Residues 33 to 44 (TLDHKKLRTPLN) lie on the Cytoplasmic side of the membrane. A helical transmembrane segment spans residues 45–67 (YILLNLAVADLFMVLGGFTTTMY). Topologically, residues 68–81 (TSMHGYFVLGRLGC) are extracellular. Cysteine 81 and cysteine 158 are oxidised to a cystine. The chain crosses the membrane as a helical span at residues 82-104 (NLEGFFATLGGEIALWSLVVLAI). A 'Ionic lock' involved in activated form stabilization motif is present at residues 105–107 (ERW). At 105–123 (ERWIVVCKPISNFRFTEDH) the chain is on the cytoplasmic side. The helical transmembrane segment at 124 to 144 (AIMGLAFSWVMALTCAVPPLV) threads the bilayer. The Extracellular portion of the chain corresponds to 145-173 (GWSRYIPEGMQCSCGVDYYTRAEGFNTES). A helical membrane pass occupies residues 174–195 (FVLYMFTVHFLIPLSVIFFCYG). Topologically, residues 196–223 (RLLCAVKEAAAAQQESETTQRAEKEVSR) are cytoplasmic. A helical membrane pass occupies residues 224-245 (MVVLMVIGFLVCWLPYASVAWW). Topologically, residues 246–257 (IFCNQGSEFGPI) are extracellular. A helical transmembrane segment spans residues 258–279 (FMTLPAFFAKTSAIYNPLIYIC). Lysine 267 carries the post-translational modification N6-(retinylidene)lysine. Residues 280–289 (MNKQFRHCMI) are Cytoplasmic-facing.

It belongs to the G-protein coupled receptor 1 family. Opsin subfamily. In terms of processing, phosphorylated on some or all of the serine and threonine residues present in the C-terminal region. Post-translationally, contains one covalently linked retinal chromophore.

The protein resides in the membrane. It is found in the cell projection. The protein localises to the cilium. It localises to the photoreceptor outer segment. Functionally, photoreceptor required for image-forming vision at low light intensity. While most salt water fish species use retinal as chromophore, most freshwater fish use 3-dehydroretinal, or a mixture of retinal and 3-dehydroretinal. Light-induced isomerization of 11-cis to all-trans retinal triggers a conformational change that activates signaling via G-proteins. Subsequent receptor phosphorylation mediates displacement of the bound G-protein alpha subunit by arrestin and terminates signaling. The polypeptide is Rhodopsin (rho) (Procottus jeittelesii (Red sculpin)).